The following is a 419-amino-acid chain: Adenylosuccinate synthetase (419 aa).

Residues Gly-12 to Lys-18 and Gly-40 to Thr-42 contribute to the GTP site. The active-site Proton acceptor is Asp-13. Residues Asp-13 and Gly-40 each contribute to the Mg(2+) site. Residues Asp-13–Lys-16, Asn-38–His-41, Thr-128, Arg-142, Gln-220, Thr-235, and Arg-299 contribute to the IMP site. His-41 (proton donor) is an active-site residue. Position 295–301 (Ser-295–Arg-301) interacts with substrate. GTP contacts are provided by residues Arg-301, Lys-327–Asp-329, and Ser-407–Gly-409.

This sequence belongs to the adenylosuccinate synthetase family. As to quaternary structure, homodimer. It depends on Mg(2+) as a cofactor.

It localises to the cytoplasm. It carries out the reaction IMP + L-aspartate + GTP = N(6)-(1,2-dicarboxyethyl)-AMP + GDP + phosphate + 2 H(+). The protein operates within purine metabolism; AMP biosynthesis via de novo pathway; AMP from IMP: step 1/2. In terms of biological role, plays an important role in the de novo pathway of purine nucleotide biosynthesis. Catalyzes the first committed step in the biosynthesis of AMP from IMP. The protein is Adenylosuccinate synthetase of Azobacteroides pseudotrichonymphae genomovar. CFP2.